A 531-amino-acid polypeptide reads, in one-letter code: 2,3-bisphosphoglycerate-independent phosphoglycerate mutase (531 aa).

The Mn(2+) site is built by D13 and S63. Catalysis depends on S63, which acts as the Phosphoserine intermediate. Substrate-binding positions include H124, 154-155, R187, R193, 261-264, and K342; these read RD and RPDR. Mn(2+) contacts are provided by D420, H424, D462, H463, and H480.

It belongs to the BPG-independent phosphoglycerate mutase family. In terms of assembly, monomer. It depends on Mn(2+) as a cofactor.

The catalysed reaction is (2R)-2-phosphoglycerate = (2R)-3-phosphoglycerate. Its pathway is carbohydrate degradation; glycolysis; pyruvate from D-glyceraldehyde 3-phosphate: step 3/5. Its function is as follows. Catalyzes the interconversion of 2-phosphoglycerate and 3-phosphoglycerate. The polypeptide is 2,3-bisphosphoglycerate-independent phosphoglycerate mutase (Mycoplasma mycoides subsp. mycoides SC (strain CCUG 32753 / NCTC 10114 / PG1)).